Consider the following 334-residue polypeptide: Small ribosomal subunit protein uS2 (334 aa).

Belongs to the universal ribosomal protein uS2 family.

This Rhodopseudomonas palustris (strain BisB18) protein is Small ribosomal subunit protein uS2.